Reading from the N-terminus, the 345-residue chain is N-acetyl-gamma-glutamyl-phosphate reductase (345 aa).

Cysteine 151 is an active-site residue.

It belongs to the NAGSA dehydrogenase family. Type 1 subfamily.

It is found in the cytoplasm. It catalyses the reaction N-acetyl-L-glutamate 5-semialdehyde + phosphate + NADP(+) = N-acetyl-L-glutamyl 5-phosphate + NADPH + H(+). It functions in the pathway amino-acid biosynthesis; L-arginine biosynthesis; N(2)-acetyl-L-ornithine from L-glutamate: step 3/4. Its function is as follows. Catalyzes the NADPH-dependent reduction of N-acetyl-5-glutamyl phosphate to yield N-acetyl-L-glutamate 5-semialdehyde. This Clostridium novyi (strain NT) protein is N-acetyl-gamma-glutamyl-phosphate reductase.